The sequence spans 105 residues: uncharacterized protein (105 aa).

Residues 1–27 (MQSPAMKRIKSSSHSRWDGSGSVNEMP) form a disordered region.

The protein resides in the mitochondrion. This is an uncharacterized protein from Arabidopsis thaliana (Mouse-ear cress).